The following is an 875-amino-acid chain: Cytosolic phospholipase A2 epsilon (875 aa).

The disordered stretch occupies residues 16–70; the sequence is THASEGHHGLGTSMLVPKNPQGEEDSKLGRNCSGFEDAQDPQTAVPSSPLLSMAS. The 124-residue stretch at 60–183 folds into the C2 domain; sequence VPSSPLLSMA…CLRNKTHVKF (124 aa). The segment covering 61–70 has biased composition (low complexity); it reads PSSPLLSMAS. Positions 97, 103, 153, 155, and 161 each coordinate Ca(2+). The PLA2c domain maps to 332-875; the sequence is PCSDTLDVRL…KKRMRSQCPS (544 aa). Ser420 serves as the catalytic Nucleophile. Catalysis depends on Asp708, which acts as the Proton acceptor. At Ser808 the chain carries Phosphoserine. The required for localization at membrane structures stretch occupies residues 865-875; that stretch reads EKKRMRSQCPS.

Ca(2+) is required as a cofactor. Predominantly expressed in brain, heart, skeletal muscle, testis and thyroid. Expressed in neurons but not astrocytes or microglia. Expressed at lower level in stomach.

It localises to the cytoplasm. It is found in the cytosol. The protein resides in the early endosome membrane. The protein localises to the lysosome membrane. Its subcellular location is the cell membrane. It carries out the reaction a 1,2-diacyl-sn-glycero-3-phosphoethanolamine + a 1,2-diacyl-sn-glycero-3-phosphocholine = an N-acyl-1,2-diacyl-sn-glycero-3-phosphoethanolamine + a 2-acyl-sn-glycero-3-phosphocholine + H(+). The catalysed reaction is 1-hexadecanoyl-2-octadecanoyl-sn-glycero-3-phosphocholine + 1,2-di-(9Z-octadecenoyl)-sn-glycero-3-phosphoethanolamine = 2-octadecanoyl-sn-glycero-3-phosphocholine + N-hexadecanoyl-1,2-di-(9Z-octadecenoyl)-sn-glycero-3-phosphoethanolamine + H(+). The enzyme catalyses 1-octadecanoyl-2-hexadecanoyl-sn-glycero-3-phosphocholine + 1,2-di-(9Z-octadecenoyl)-sn-glycero-3-phosphoethanolamine = N-octadecanoyl-1,2-di-(9Z-octadecenoyl)-sn-glycero-3-phosphoethanolamine + 2-hexadecanoyl-sn-glycero-3-phosphocholine + H(+). It catalyses the reaction 1,2-di-(9Z-octadecenoyl)-sn-glycero-3-phosphoethanolamine + 1,2-dihexadecanoyl-sn-glycero-3-phosphocholine = N-hexadecanoyl-1,2-di-(9Z-octadecenoyl)-sn-glycero-3-phosphoethanolamine + 2-hexadecanoyl-sn-glycero-3-phosphocholine + H(+). It carries out the reaction 1,2-di-(5Z,8Z,11Z,14Z-eicosatetraenoyl)-sn-glycero-3-phosphocholine + 1,2-di-(9Z-octadecenoyl)-sn-glycero-3-phosphoethanolamine = N-(5Z,8Z,11Z,14Z-eicosatetraenoyl)-1,2-di-(9Z-octadecenoyl)-sn-glycero-3-phosphoethanolamine + 2-(5Z,8Z,11Z,14Z)-eicosatetraenoyl-sn-glycero-3-phosphocholine + H(+). The catalysed reaction is 2 1,2-di-(9Z-octadecenoyl)-sn-glycero-3-phosphoethanolamine = N,1,2-tri-(9Z-octadecenoyl)-sn-glycero-3-phosphoethanolamine + 2-(9Z-octadecenoyl)-sn-glycero-3-phosphoethanolamine + H(+). The enzyme catalyses a 1,2-diacyl-sn-glycero-3-phosphocholine + H2O = a 1-acyl-sn-glycero-3-phosphocholine + a fatty acid + H(+). It catalyses the reaction 1-(1Z-octadecenyl)-2-(9Z-octadecenoyl)-sn-glycero-3-phosphoethanolamine + 1,2-dihexadecanoyl-sn-glycero-3-phosphocholine = 1-O-(1Z-octadecenoyl)-2-(9Z-octadecenoyl)-sn-glycero-3-phospho-N-hexadecanoyl-ethanolamine + 2-hexadecanoyl-sn-glycero-3-phosphocholine + H(+). It carries out the reaction 1-hexadecanoyl-2-(5Z,8Z,11Z,14Z-eicosatetraenoyl)-sn-glycero-3-phosphocholine + H2O = 1-hexadecanoyl-sn-glycero-3-phosphocholine + (5Z,8Z,11Z,14Z)-eicosatetraenoate + H(+). The catalysed reaction is 1-hexadecanoyl-sn-glycero-3-phosphocholine + H2O = sn-glycerol 3-phosphocholine + hexadecanoate + H(+). Stimulated by cytosolic Ca(2+). Stimulated by anionic phospholipids such as phosphatidylserine. Its function is as follows. Calcium-dependent N-acyltransferase involved in the biosynthesis of N-acyl ethanolamines (NAEs) in the brain. Transfers the sn-1 fatty acyl chain of phosphatidylcholine (fatty acyl donor) to the amine group of phosphatidylethanolamine (fatty acyl acceptor) to generate N-acyl phosphatidylethanolamine (NAPE). Similarly can use plasmenylethanolamine as a fatty acyl acceptor to form N-acyl plasmenylethanolamine (N-Acyl-PlsEt). Both NAPE and N-Acyl-PlsEt can serve as precursors of bioactive NAEs like N-arachidonoyl phosphatidylethanolamine also called anandamide. Has weak phospholipase A2 and lysophospholipase activities. Regulates intracellular membrane trafficking that requires modulation of membrane curvature as it occurs by enrichment in lysophospholipids. Promotes tubule formation involved in clathrin-independent endocytotic trafficking and cargo recycling. In Mus musculus (Mouse), this protein is Cytosolic phospholipase A2 epsilon (Pla2g4e).